The following is an 80-amino-acid chain: Defensin-like protein CAL1 (80 aa).

The N-terminal stretch at 1–31 (MAPSRRMVASAFLLLAILVATEMGTTKVAEA) is a signal peptide. 4 cysteine pairs are disulfide-bonded: Cys34-Cys80, Cys45-Cys65, Cys51-Cys74, and Cys55-Cys76.

It belongs to the DEFL family. In terms of tissue distribution, expressed preferentially in root exodermis and xylem parenchyma cells in vasculature of root and flag leaf sheath.

It is found in the secreted. Its subcellular location is the extracellular space. Plant defensin-like protein involved in accumulation of cadmium (Cd) in rice leaves. Mediates Cd efflux from cytosol into extracellular spaces via chelation. This drives Cd secretion from xylem parenchyma cells into the xylem vessels, hence lowering Cd levels in cytosol meanwhile promoting Cd translocation from roots to shoots. This Oryza sativa subsp. japonica (Rice) protein is Defensin-like protein CAL1.